The sequence spans 510 residues: MSILNIVPGRLTLAELRRVSRETGLQLQLDPSSHAAIDASAATVARVLSEGRTVYGINTGFGLLASTKIAPEELELLQRSIVLSHAAGIGAPMDDSTVRLVMALKINSLARGFSGIRRQVIEALVTLFNRQIYPVIPQKGSVGASGDLAPLSHMSAVLIGEGEAFVDGVRVPGSVAMRSAGLEPITLAPKEGLALLNGTQASTAFALEGLFAAEDLYVSATVAGSLSVEAALGSRTPFDARIHEVRGHQGQIDAARLYRDLLAHSQIEQSHENCGKVQDPYSLRCQPQVMGACLTQIRQAAEVLRVEANSVSDNPLVFAGDNDILSGGNFHAEPVAFAADNLALAIAEIGSLSERRMALLIDSNLSKLPPFLVNNGGVNSGFMIAQVTSAALASENKSLAHPASVDSLPTSANQEDHVSMATFAGRRLRDMAGNTAGILAVELLAACQGIDFRAPHQSSDKLEAAKGMLREQVPFYDKDRYFAPDIEKAAALVASGRFNSLVDGEVLPSL.

The segment at residues 144–146 is a cross-link (5-imidazolinone (Ala-Gly)); that stretch reads ASG. A 2,3-didehydroalanine (Ser) modification is found at Ser-145.

Belongs to the PAL/histidase family. In terms of processing, contains an active site 4-methylidene-imidazol-5-one (MIO), which is formed autocatalytically by cyclization and dehydration of residues Ala-Ser-Gly.

Its subcellular location is the cytoplasm. It catalyses the reaction L-histidine = trans-urocanate + NH4(+). Its pathway is amino-acid degradation; L-histidine degradation into L-glutamate; N-formimidoyl-L-glutamate from L-histidine: step 1/3. This chain is Histidine ammonia-lyase, found in Chromobacterium violaceum (strain ATCC 12472 / DSM 30191 / JCM 1249 / CCUG 213 / NBRC 12614 / NCIMB 9131 / NCTC 9757 / MK).